A 173-amino-acid polypeptide reads, in one-letter code: Small ribosomal subunit protein uS10m (173 aa).

The protein belongs to the universal ribosomal protein uS10 family. Component of the mitochondrial ribosome small subunit (28S) which comprises a 12S rRNA and about 30 distinct proteins.

The protein localises to the mitochondrion. The protein is Small ribosomal subunit protein uS10m (mRpS10) of Drosophila melanogaster (Fruit fly).